A 39-amino-acid chain; its full sequence is Cytochrome b559 subunit beta (39 aa).

Residues 14 to 30 (WLAVHGLAVPTVFFLGA) traverse the membrane as a helical segment. His18 is a binding site for heme.

The protein belongs to the PsbE/PsbF family. In terms of assembly, heterodimer of an alpha subunit and a beta subunit. PSII is composed of 1 copy each of membrane proteins PsbA, PsbB, PsbC, PsbD, PsbE, PsbF, PsbH, PsbI, PsbJ, PsbK, PsbL, PsbM, PsbT, PsbX, PsbY, PsbZ, Psb30/Ycf12, at least 3 peripheral proteins of the oxygen-evolving complex and a large number of cofactors. It forms dimeric complexes. It depends on heme b as a cofactor.

The protein localises to the plastid. The protein resides in the chloroplast thylakoid membrane. In terms of biological role, this b-type cytochrome is tightly associated with the reaction center of photosystem II (PSII). PSII is a light-driven water:plastoquinone oxidoreductase that uses light energy to abstract electrons from H(2)O, generating O(2) and a proton gradient subsequently used for ATP formation. It consists of a core antenna complex that captures photons, and an electron transfer chain that converts photonic excitation into a charge separation. The protein is Cytochrome b559 subunit beta of Physcomitrium patens (Spreading-leaved earth moss).